Consider the following 226-residue polypeptide: 2-C-methyl-D-erythritol 4-phosphate cytidylyltransferase (226 aa).

The protein belongs to the IspD/TarI cytidylyltransferase family. IspD subfamily.

The catalysed reaction is 2-C-methyl-D-erythritol 4-phosphate + CTP + H(+) = 4-CDP-2-C-methyl-D-erythritol + diphosphate. It participates in isoprenoid biosynthesis; isopentenyl diphosphate biosynthesis via DXP pathway; isopentenyl diphosphate from 1-deoxy-D-xylulose 5-phosphate: step 2/6. In terms of biological role, catalyzes the formation of 4-diphosphocytidyl-2-C-methyl-D-erythritol from CTP and 2-C-methyl-D-erythritol 4-phosphate (MEP). The sequence is that of 2-C-methyl-D-erythritol 4-phosphate cytidylyltransferase from Rhodococcus opacus (strain B4).